A 172-amino-acid polypeptide reads, in one-letter code: Bifunctional protein PyrR (172 aa).

The PRPP-binding signature appears at leucine 90–threonine 102.

The protein belongs to the purine/pyrimidine phosphoribosyltransferase family. PyrR subfamily.

It catalyses the reaction UMP + diphosphate = 5-phospho-alpha-D-ribose 1-diphosphate + uracil. In terms of biological role, regulates the transcription of the pyrimidine nucleotide (pyr) operon in response to exogenous pyrimidines. Its function is as follows. Also displays a weak uracil phosphoribosyltransferase activity which is not physiologically significant. The protein is Bifunctional protein PyrR of Pseudomonas entomophila (strain L48).